The chain runs to 64 residues: SPbeta prophage-derived uncharacterized protein YoqI (64 aa).

The protein is SPbeta prophage-derived uncharacterized protein YoqI (yoqI) of Bacillus subtilis (strain 168).